The primary structure comprises 185 residues: Ribosome-recycling factor (185 aa).

The protein belongs to the RRF family.

It localises to the cytoplasm. Its function is as follows. Responsible for the release of ribosomes from messenger RNA at the termination of protein biosynthesis. May increase the efficiency of translation by recycling ribosomes from one round of translation to another. The sequence is that of Ribosome-recycling factor from Francisella tularensis subsp. holarctica (strain FTNF002-00 / FTA).